Reading from the N-terminus, the 631-residue chain is ATP-dependent protease PrkA (631 aa).

T217 carries the post-translational modification Phosphothreonine. S219 is subject to Phosphoserine.

Belongs to the PrkA family. In terms of processing, phosphorylated by PrkC on two sites, Thr-217 and Ser-219, with the threonine being the major site of modification.

Its subcellular location is the forespore. The protein resides in the spore coat. The catalysed reaction is Hydrolysis of proteins in presence of ATP.. With respect to regulation, hydrolase activity is regulated by phosphorylation by the Ser/Thr kinase PrkC, probably allowing fine control of sporulation. Phosphorylation by PrkC does not prevent ATP fixation but it inhibits specifically PrkA protease activity and down-regulates the sporulation processes. Hydrolase activity is inhibited by a protease inhibitor, phenylmethylsulfonyl fluoride (PMSF). Potential kinase activity requires the presence of MgCl(2) and is inhibited in the presence of MnCl(2). In terms of biological role, ATP-dependent protease that regulates sporulation. Is able to bind and hydrolyze ATP. This ATP-dependent protease activity is necessary for efficient sporulation of B.subtilis. In vitro, can hydrolyze alpha-casein, an exogenous substrate of Lon proteases, in an ATP-dependent manner. PrkA also modulates sporulation by negatively regulating the transcriptional regulator Hpr/ScoC to induce the expression of sigK. The control of sporulation mediated via the Hpr/ScoC regulator is probably indirect. PrkA was originally thought to be a protein kinase, as it has been shown to phosphorylate in vitro an unidentified 60 kDa protein from B.subtilis crude extracts at a serine residue. However, Zhang et al. did not observe autophosphorylation or kinase activity for this protein, suggesting that it may have lost its kinase activity during evolution or may be a pseudokinase. This is ATP-dependent protease PrkA from Bacillus subtilis (strain 168).